The primary structure comprises 1050 residues: Probable E3 ubiquitin-protein ligase HERC3 (1050 aa).

RCC1 repeat units follow at residues 1–51, 52–101, 102–154, 156–207, 208–259, 261–311, and 313–366; these read MLCW…FLLE, DGEV…ALSD, RGQL…ALAA, GQFF…ALSL, SGAV…VLTK, GGVF…AFVP, and SGLI…IVKQ. The HECT domain maps to 951-1050; it reads YKGDYSATHP…LDNYEGFSLA (100 aa). The Glycyl thioester intermediate role is filled by cysteine 1018.

Ubiquitinated; which promotes degradation by the proteasome.

It is found in the cytoplasm. The protein localises to the cytoplasmic vesicle. It carries out the reaction S-ubiquitinyl-[E2 ubiquitin-conjugating enzyme]-L-cysteine + [acceptor protein]-L-lysine = [E2 ubiquitin-conjugating enzyme]-L-cysteine + N(6)-ubiquitinyl-[acceptor protein]-L-lysine.. Its pathway is protein modification; protein ubiquitination. Functionally, E3 ubiquitin-protein ligase which accepts ubiquitin from an E2 ubiquitin-conjugating enzyme in the form of a thioester and then directly transfers the ubiquitin to targeted substrates. This Homo sapiens (Human) protein is Probable E3 ubiquitin-protein ligase HERC3 (HERC3).